The sequence spans 364 residues: Uroporphyrinogen decarboxylase (364 aa).

R34, A36, R38, R47, D83, Y161, S216, and H336 together coordinate coproporphyrinogen I. Coproporphyrinogen III is bound by residues R34, A36, and R38. Residues D83, Y161, S216, and H336 each contribute to the coproporphyrinogen III site.

It belongs to the uroporphyrinogen decarboxylase family. In terms of assembly, homodimer.

The protein resides in the cytoplasm. It is found in the cytosol. The enzyme catalyses uroporphyrinogen III + 4 H(+) = coproporphyrinogen III + 4 CO2. The catalysed reaction is uroporphyrinogen I + 4 H(+) = coproporphyrinogen I + 4 CO2. The protein operates within porphyrin-containing compound metabolism; protoporphyrin-IX biosynthesis; coproporphyrinogen-III from 5-aminolevulinate: step 4/4. Its function is as follows. Catalyzes the sequential decarboxylation of the four acetate side chains of uroporphyrinogen to form coproporphyrinogen and participates in the fifth step in the heme biosynthetic pathway. Isomer I or isomer III of uroporphyrinogen may serve as substrate, but only coproporphyrinogen III can ultimately be converted to heme. In vitro also decarboxylates pentacarboxylate porphyrinogen I. This Rattus norvegicus (Rat) protein is Uroporphyrinogen decarboxylase.